The following is a 907-amino-acid chain: Avirulence protein A (907 aa).

2 stretches are compositionally biased toward polar residues: residues 1 to 11 (MWNVSKSSNNL) and 124 to 136 (AGSN…SSDP). 2 disordered regions span residues 1–47 (MWNV…HDQL) and 116–157 (NDDF…KKSY).

In Pseudomonas savastanoi pv. glycinea (Pseudomonas syringae pv. glycinea), this protein is Avirulence protein A (avrA).